A 184-amino-acid polypeptide reads, in one-letter code: Signal peptidase complex subunit 3 (184 aa).

At 1-14 the chain is on the cytoplasmic side; that stretch reads MFSFVQRFQNVSNQ. A helical; Signal-anchor for type II membrane protein membrane pass occupies residues 15-35; sequence AFSMGIVMVVFIMASSYYQLI. Residues 36–184 are Lumenal-facing; sequence NNNAFSVPSN…TLTVENKNKV (149 aa). N-linked (GlcNAc...) asparagine glycosylation is found at Asn-102 and Asn-173.

Belongs to the SPCS3 family. As to quaternary structure, component of the signal peptidase complex (SPC) composed of a catalytic subunit SEC11 and three accessory subunits SPC1, SPC2 and SPC3. The complex induces a local thinning of the ER membrane which is used to measure the length of the signal peptide (SP) h-region of protein substrates. This ensures the selectivity of the complex towards h-regions shorter than 18-20 amino acids. Interacts with SEC11. SPC associates with the translocon complex.

The protein localises to the endoplasmic reticulum membrane. Its function is as follows. Essential component of the signal peptidase complex (SPC) which catalyzes the cleavage of N-terminal signal sequences from nascent proteins as they are translocated into the lumen of the endoplasmic reticulum. Essential for the SPC catalytic activity, possibly by stabilizing and positioning the active center of the complex close to the lumenal surface. Essential for viability. This is Signal peptidase complex subunit 3 (SPC3) from Saccharomyces cerevisiae (strain ATCC 204508 / S288c) (Baker's yeast).